We begin with the raw amino-acid sequence, 155 residues long: Probable cyclic pyranopterin monophosphate synthase (155 aa).

Residues 74–76 (MCH) and 110–111 (ME) each bind substrate. Residue Asp-125 is part of the active site.

This sequence belongs to the MoaC family. As to quaternary structure, homohexamer; trimer of dimers.

It catalyses the reaction (8S)-3',8-cyclo-7,8-dihydroguanosine 5'-triphosphate = cyclic pyranopterin phosphate + diphosphate. The protein operates within cofactor biosynthesis; molybdopterin biosynthesis. Functionally, catalyzes the conversion of (8S)-3',8-cyclo-7,8-dihydroguanosine 5'-triphosphate to cyclic pyranopterin monophosphate (cPMP). In Methanoregula boonei (strain DSM 21154 / JCM 14090 / 6A8), this protein is Probable cyclic pyranopterin monophosphate synthase.